A 353-amino-acid chain; its full sequence is Uroporphyrinogen decarboxylase (353 aa).

Residues 30–34 (RQAGR), Asp79, Tyr154, Ser209, and His332 contribute to the substrate site.

It belongs to the uroporphyrinogen decarboxylase family. In terms of assembly, homodimer.

Its subcellular location is the cytoplasm. It carries out the reaction uroporphyrinogen III + 4 H(+) = coproporphyrinogen III + 4 CO2. It functions in the pathway porphyrin-containing compound metabolism; protoporphyrin-IX biosynthesis; coproporphyrinogen-III from 5-aminolevulinate: step 4/4. Its function is as follows. Catalyzes the decarboxylation of four acetate groups of uroporphyrinogen-III to yield coproporphyrinogen-III. The polypeptide is Uroporphyrinogen decarboxylase (Mycobacterium marinum (strain ATCC BAA-535 / M)).